Consider the following 414-residue polypeptide: Esterase FrsA (414 aa).

The protein belongs to the FrsA family.

The catalysed reaction is a carboxylic ester + H2O = an alcohol + a carboxylate + H(+). In terms of biological role, catalyzes the hydrolysis of esters. The polypeptide is Esterase FrsA (Enterobacter sp. (strain 638)).